The primary structure comprises 418 residues: Glutamyl-tRNA reductase (418 aa).

Substrate is bound by residues 49–52, Ser109, 114–116, and Gln120; these read TCNR and EPQ. Cys50 serves as the catalytic Nucleophile. 189-194 contributes to the NADP(+) binding site; the sequence is GAGETI.

This sequence belongs to the glutamyl-tRNA reductase family. Homodimer.

The catalysed reaction is (S)-4-amino-5-oxopentanoate + tRNA(Glu) + NADP(+) = L-glutamyl-tRNA(Glu) + NADPH + H(+). Its pathway is porphyrin-containing compound metabolism; protoporphyrin-IX biosynthesis; 5-aminolevulinate from L-glutamyl-tRNA(Glu): step 1/2. Functionally, catalyzes the NADPH-dependent reduction of glutamyl-tRNA(Glu) to glutamate 1-semialdehyde (GSA). In Shigella flexneri, this protein is Glutamyl-tRNA reductase.